A 151-amino-acid polypeptide reads, in one-letter code: Peptide deformylase (151 aa).

The Fe cation site is built by cysteine 88 and histidine 130. The active site involves glutamate 131. Residue histidine 134 coordinates Fe cation.

Belongs to the polypeptide deformylase family. It depends on Fe(2+) as a cofactor.

The enzyme catalyses N-terminal N-formyl-L-methionyl-[peptide] + H2O = N-terminal L-methionyl-[peptide] + formate. Its function is as follows. Removes the formyl group from the N-terminal Met of newly synthesized proteins. Requires at least a dipeptide for an efficient rate of reaction. N-terminal L-methionine is a prerequisite for activity but the enzyme has broad specificity at other positions. This is Peptide deformylase from Heliobacterium modesticaldum (strain ATCC 51547 / Ice1).